The primary structure comprises 298 residues: NAD-dependent L-serine dehydrogenase (298 aa).

Residues 2–31 (KQIA…NVFD), 65–66 (LP), Pro66, and Thr96 contribute to the NAD(+) site. Lys171 is a catalytic residue. Lys246 lines the NAD(+) pocket.

It belongs to the HIBADH-related family. As to quaternary structure, homotetramer, dimer of dimers.

The enzyme catalyses L-serine + NAD(+) = aminoacetaldehyde + CO2 + NADH. It participates in amino-acid degradation. Functionally, NAD-dependent L-serine dehydrogenase that catalyzes the oxidation of L-serine and methyl-L-serine and is possibly involved in serine catabolism. Has low activity toward beta-hydroxyisobutyrate. The chain is NAD-dependent L-serine dehydrogenase from Pseudomonas aeruginosa (strain ATCC 15692 / DSM 22644 / CIP 104116 / JCM 14847 / LMG 12228 / 1C / PRS 101 / PAO1).